Here is a 149-residue protein sequence, read N- to C-terminus: Flagellar assembly factor FliW (149 aa).

The protein belongs to the FliW family. Interacts with translational regulator CsrA and flagellin(s).

It is found in the cytoplasm. Functionally, acts as an anti-CsrA protein, binds CsrA and prevents it from repressing translation of its target genes, one of which is flagellin. Binds to flagellin and participates in the assembly of the flagellum. The sequence is that of Flagellar assembly factor FliW from Thermotoga maritima (strain ATCC 43589 / DSM 3109 / JCM 10099 / NBRC 100826 / MSB8).